Reading from the N-terminus, the 67-residue chain is Conotoxin Cal6.35 (67 aa).

The signal sequence occupies residues 1 to 22 (MKLTCVLIVAVLILTACQVIAA). 3 disulfide bridges follow: Cys43/Cys53, Cys46/Cys59, and Cys52/Cys66.

Belongs to the conotoxin O1 superfamily. Expressed by the venom duct.

It is found in the secreted. Functionally, probable neurotoxin. The polypeptide is Conotoxin Cal6.35 (Californiconus californicus (California cone)).